A 64-amino-acid polypeptide reads, in one-letter code: Small ribosomal subunit protein bS21 (64 aa).

It belongs to the bacterial ribosomal protein bS21 family.

This chain is Small ribosomal subunit protein bS21, found in Neorickettsia sennetsu (strain ATCC VR-367 / Miyayama) (Ehrlichia sennetsu).